The sequence spans 512 residues: Tyrosine-protein kinase Lyn (512 aa).

Residues 1–62 (MGCIKSKGKD…GQRFQTKDPE (62 aa)) are disordered. A lipid anchor (N-myristoyl glycine) is attached at Gly-2. The S-palmitoyl cysteine moiety is linked to residue Cys-3. 2 positions are modified to phosphoserine: Ser-11 and Ser-13. The region spanning 63–123 (EQGDIVVALY…PSNYVAKLNT (61 aa)) is the SH3 domain. Positions 129–226 (WFFKDITRKD…GLCRRLEKAC (98 aa)) constitute an SH2 domain. Tyr-193 bears the Phosphotyrosine mark. Ser-228 carries the phosphoserine modification. Residues 247-501 (IKLVKRLGAG…YLQSVLDDFY (255 aa)) form the Protein kinase domain. Residues 253–261 (LGAGQFGEV) and Lys-275 each bind ATP. 2 positions are modified to phosphotyrosine: Tyr-306 and Tyr-316. The active-site Proton acceptor is the Asp-367. The residue at position 397 (Tyr-397) is a Phosphotyrosine; by autocatalysis. A phosphotyrosine mark is found at Tyr-460 and Tyr-473. The residue at position 508 (Tyr-508) is a Phosphotyrosine; by autocatalysis, CSK and MATK.

This sequence belongs to the protein kinase superfamily. Tyr protein kinase family. SRC subfamily. In terms of assembly, interacts with TEC. Interacts (via SH2 domain) with FLT3 (tyrosine phosphorylated). Interacts with LIME1 and with CD79A upon activation of the B-cell antigen receptor. Interacts with the B-cell receptor complex. Interacts with phosphorylated THEMIS2. Interacts with EPOR. Interacts with MS4A2/FCER1B. Interaction (via the SH2 and SH3 domains) with MUC1 is stimulated by IL7 and the subsequent phosphorylation increases the binding between MUC1 and CTNNB1/beta-catenin. Interacts with ADAM15. Interacts with NDFIP2 and more weakly with NDFIP1. Interacts with FASLG. Interacts with KIT. Interacts with HCLS1. Interacts with FCGR2B. Interacts with FCGR1A; the interaction may be indirect. Interacts with CD19, CD22, CD79A and CD79B. Interacts (via SH3 domain) with CBLC, PPP1R15A and PDE4A. Interacts with TGFB1I1. Interacts (via SH3 domain) with PIK3R1, the regulatory subunit of phosphatidylinositol 3-kinase; this interaction enhances phosphatidylinositol 3-kinase activity. Interacts with CSF2RB, the common subunit of the IL3, IL5 and CSF2 receptors. Interacts with PAG1; identified in a complex with PAG1 and STAT3. Interacts with ABL1. Interacts with PTPN6/SHP-1. Interacts (via SH3 domain) with SCIMP (via proline-rich region). This interaction facilitates the phosphorylation of SCIMP on 'Tyr-107', which enhances binding of SCIMP to TLR4, and consequently the phosphorylation of TLR4 in response to stimulation by lipopolysaccharide in macrophages. Interacts with LPXN (via LD motif 3) and the interaction is induced upon B-cell antigen receptor (BCR) activation. Interacts (via SH3-domain) with ANKRD54 (via ankyrin repeat region) in an activation-independent status of LYN. Forms a multiprotein complex with ANKRD54 and HCLS1. Interacts (via SH2 and SH3 domains) with UNC119; leading to LYN activation. Interacts with CD36. Interacts with LYN. Interacts with SKAP1 and FYB1; this interaction promotes the phosphorylation of CLNK. Interacts with BCAR1/CAS and NEDD9/HEF1. (Microbial infection) Interacts with Epstein-Barr virus LMP2A. As to quaternary structure, (Microbial infection) Interacts with Herpes virus saimiri tyrosine kinase interacting protein (Tip). Ubiquitinated by CBL, leading to its degradation. Ubiquitination is SH3-dependent. Post-translationally, autophosphorylated. Phosphorylated on tyrosine residues in response to KIT signaling. Phosphorylation at Tyr-397 is required for optimal activity. Phosphorylation at Tyr-508 inhibits kinase activity. Phosphorylated at Tyr-508 by CSK. Dephosphorylated by PTPRC/CD45. Becomes rapidly phosphorylated upon activation of the B-cell receptor and the immunoglobulin receptor FCGR1A. Phosphorylated in response to ITGB1 in B-cells. Detected in monocytes (at protein level). Detected in placenta, and in fetal brain, lung, liver and kidney. Widely expressed in a variety of organs, tissues, and cell types such as epidermoid, hematopoietic, and neuronal cells. Expressed in primary neuroblastoma tumors.

It is found in the cell membrane. The protein resides in the nucleus. The protein localises to the cytoplasm. It localises to the perinuclear region. Its subcellular location is the golgi apparatus. It is found in the membrane. The enzyme catalyses L-tyrosyl-[protein] + ATP = O-phospho-L-tyrosyl-[protein] + ADP + H(+). Subject to autoinhibition, mediated by intramolecular interactions between the SH2 domain and the C-terminal phosphotyrosine. Phosphorylation at Tyr-397 is required for optimal activity. Phosphorylated by CSK at Tyr-508; phosphorylation at Tyr-508 inhibits kinase activity. Kinase activity is modulated by dephosphorylation by PTPRC/CD45. Inhibited by Dasatinib, PP2, and SU6656. In terms of biological role, non-receptor tyrosine-protein kinase that transmits signals from cell surface receptors and plays an important role in the regulation of innate and adaptive immune responses, hematopoiesis, responses to growth factors and cytokines, integrin signaling, but also responses to DNA damage and genotoxic agents. Functions primarily as negative regulator, but can also function as activator, depending on the context. Required for the initiation of the B-cell response, but also for its down-regulation and termination. Plays an important role in the regulation of B-cell differentiation, proliferation, survival and apoptosis, and is important for immune self-tolerance. Acts downstream of several immune receptors, including the B-cell receptor, CD79A, CD79B, CD5, CD19, CD22, FCER1, FCGR2, FCGR1A, TLR2 and TLR4. Plays a role in the inflammatory response to bacterial lipopolysaccharide. Mediates the responses to cytokines and growth factors in hematopoietic progenitors, platelets, erythrocytes, and in mature myeloid cells, such as dendritic cells, neutrophils and eosinophils. Acts downstream of EPOR, KIT, MPL, the chemokine receptor CXCR4, as well as the receptors for IL3, IL5 and CSF2. Plays an important role in integrin signaling. Regulates cell proliferation, survival, differentiation, migration, adhesion, degranulation, and cytokine release. Involved in the regulation of endothelial activation, neutrophil adhesion and transendothelial migration. Down-regulates signaling pathways by phosphorylation of immunoreceptor tyrosine-based inhibitory motifs (ITIM), that then serve as binding sites for phosphatases, such as PTPN6/SHP-1, PTPN11/SHP-2 and INPP5D/SHIP-1, that modulate signaling by dephosphorylation of kinases and their substrates. Phosphorylates LIME1 in response to CD22 activation. Phosphorylates BTK, CBL, CD5, CD19, CD72, CD79A, CD79B, CSF2RB, DOK1, HCLS1, LILRB3/PIR-B, MS4A2/FCER1B, SYK and TEC. Promotes phosphorylation of SIRPA, PTPN6/SHP-1, PTPN11/SHP-2 and INPP5D/SHIP-1. Mediates phosphorylation of the BCR-ABL fusion protein. Required for rapid phosphorylation of FER in response to FCER1 activation. Mediates KIT phosphorylation. Acts as an effector of EPOR (erythropoietin receptor) in controlling KIT expression and may play a role in erythroid differentiation during the switch between proliferation and maturation. Depending on the context, activates or inhibits several signaling cascades. Regulates phosphatidylinositol 3-kinase activity and AKT1 activation. Regulates activation of the MAP kinase signaling cascade, including activation of MAP2K1/MEK1, MAPK1/ERK2, MAPK3/ERK1, MAPK8/JNK1 and MAPK9/JNK2. Mediates activation of STAT5A and/or STAT5B. Phosphorylates LPXN on 'Tyr-72'. Kinase activity facilitates TLR4-TLR6 heterodimerization and signal initiation. Phosphorylates SCIMP on 'Tyr-107'; this enhances binding of SCIMP to TLR4, promoting the phosphorylation of TLR4, and a selective cytokine response to lipopolysaccharide in macrophages. Phosphorylates CLNK. Phosphorylates BCAR1/CAS and NEDD9/HEF1. This is Tyrosine-protein kinase Lyn (LYN) from Homo sapiens (Human).